The primary structure comprises 196 residues: DnaA initiator-associating protein DiaA (196 aa).

Residues 34-196 (MVQSLLNGNK…DNTLFPHQND (163 aa)) enclose the SIS domain.

Belongs to the SIS family. DiaA subfamily. Homotetramer; dimer of dimers.

Required for the timely initiation of chromosomal replication via direct interactions with the DnaA initiator protein. The chain is DnaA initiator-associating protein DiaA from Pectobacterium carotovorum subsp. carotovorum (strain PC1).